The sequence spans 213 residues: ATP phosphoribosyltransferase (213 aa).

The protein belongs to the ATP phosphoribosyltransferase family. Short subfamily. In terms of assembly, heteromultimer composed of HisG and HisZ subunits.

It localises to the cytoplasm. The catalysed reaction is 1-(5-phospho-beta-D-ribosyl)-ATP + diphosphate = 5-phospho-alpha-D-ribose 1-diphosphate + ATP. It functions in the pathway amino-acid biosynthesis; L-histidine biosynthesis; L-histidine from 5-phospho-alpha-D-ribose 1-diphosphate: step 1/9. Functionally, catalyzes the condensation of ATP and 5-phosphoribose 1-diphosphate to form N'-(5'-phosphoribosyl)-ATP (PR-ATP). Has a crucial role in the pathway because the rate of histidine biosynthesis seems to be controlled primarily by regulation of HisG enzymatic activity. In Bacillus subtilis (strain 168), this protein is ATP phosphoribosyltransferase (hisG).